A 729-amino-acid chain; its full sequence is Fatty acid oxidation complex subunit alpha (729 aa).

Positions 1 to 189 are enoyl-CoA hydratase/isomerase; the sequence is MLYKGDTLYL…KIGLVDGVVK (189 aa). A substrate-binding site is contributed by aspartate 296. Residues 311–729 are 3-hydroxyacyl-CoA dehydrogenase; that stretch reads ETPKQAAVLG…ARAVGDLKTA (419 aa). NAD(+) is bound by residues methionine 324, aspartate 343, 400 to 402, lysine 407, and serine 429; that span reads VVE. Histidine 450 serves as the catalytic For 3-hydroxyacyl-CoA dehydrogenase activity. Asparagine 453 lines the NAD(+) pocket. 2 residues coordinate substrate: asparagine 500 and tyrosine 660.

The protein in the N-terminal section; belongs to the enoyl-CoA hydratase/isomerase family. In the C-terminal section; belongs to the 3-hydroxyacyl-CoA dehydrogenase family. As to quaternary structure, heterotetramer of two alpha chains (FadB) and two beta chains (FadA).

The enzyme catalyses a (3S)-3-hydroxyacyl-CoA + NAD(+) = a 3-oxoacyl-CoA + NADH + H(+). The catalysed reaction is a (3S)-3-hydroxyacyl-CoA = a (2E)-enoyl-CoA + H2O. It carries out the reaction a 4-saturated-(3S)-3-hydroxyacyl-CoA = a (3E)-enoyl-CoA + H2O. It catalyses the reaction (3S)-3-hydroxybutanoyl-CoA = (3R)-3-hydroxybutanoyl-CoA. The enzyme catalyses a (3Z)-enoyl-CoA = a 4-saturated (2E)-enoyl-CoA. The catalysed reaction is a (3E)-enoyl-CoA = a 4-saturated (2E)-enoyl-CoA. Its pathway is lipid metabolism; fatty acid beta-oxidation. Involved in the aerobic and anaerobic degradation of long-chain fatty acids via beta-oxidation cycle. Catalyzes the formation of 3-oxoacyl-CoA from enoyl-CoA via L-3-hydroxyacyl-CoA. It can also use D-3-hydroxyacyl-CoA and cis-3-enoyl-CoA as substrate. This is Fatty acid oxidation complex subunit alpha from Escherichia fergusonii (strain ATCC 35469 / DSM 13698 / CCUG 18766 / IAM 14443 / JCM 21226 / LMG 7866 / NBRC 102419 / NCTC 12128 / CDC 0568-73).